Consider the following 171-residue polypeptide: 3-hydroxydecanoyl-[acyl-carrier-protein] dehydratase (171 aa).

H70 is an active-site residue.

It belongs to the thioester dehydratase family. FabA subfamily. As to quaternary structure, homodimer.

The protein localises to the cytoplasm. The catalysed reaction is a (3R)-hydroxyacyl-[ACP] = a (2E)-enoyl-[ACP] + H2O. The enzyme catalyses (3R)-hydroxydecanoyl-[ACP] = (2E)-decenoyl-[ACP] + H2O. It catalyses the reaction (2E)-decenoyl-[ACP] = (3Z)-decenoyl-[ACP]. It functions in the pathway lipid metabolism; fatty acid biosynthesis. Its function is as follows. Necessary for the introduction of cis unsaturation into fatty acids. Catalyzes the dehydration of (3R)-3-hydroxydecanoyl-ACP to E-(2)-decenoyl-ACP and then its isomerization to Z-(3)-decenoyl-ACP. Can catalyze the dehydratase reaction for beta-hydroxyacyl-ACPs with saturated chain lengths up to 16:0, being most active on intermediate chain length. The protein is 3-hydroxydecanoyl-[acyl-carrier-protein] dehydratase of Pseudomonas putida (strain ATCC 700007 / DSM 6899 / JCM 31910 / BCRC 17059 / LMG 24140 / F1).